The primary structure comprises 140 residues: Protein NrdI (140 aa).

Belongs to the NrdI family.

Its function is as follows. Probably involved in ribonucleotide reductase function. The chain is Protein NrdI from Photorhabdus laumondii subsp. laumondii (strain DSM 15139 / CIP 105565 / TT01) (Photorhabdus luminescens subsp. laumondii).